The sequence spans 114 residues: Biofilm growth-associated repressor (114 aa).

An HTH arsR-type domain is found at 17–111 (DMEKRANEVA…ALYTIFCTQE (95 aa)). Residues 51 to 74 (VGELEQQIGIGQPTLSQQLGVLRE) constitute a DNA-binding region (H-T-H motif).

Functionally, represses an operon that probably comprises itself, PD_1892, PD_1893, PD_1894 and blh. Binds to a palindromic AT-rich sequence spanning the -10 region of the blh promoter and blocks transcription of the operon. In Xylella fastidiosa (strain Temecula1 / ATCC 700964), this protein is Biofilm growth-associated repressor (bigR).